Here is a 99-residue protein sequence, read N- to C-terminus: Malonate decarboxylase acyl carrier protein (99 aa).

Residue Ser-25 is modified to O-(phosphoribosyl dephospho-coenzyme A)serine.

This sequence belongs to the MdcC family. In terms of processing, covalently binds the prosthetic group of malonate decarboxylase.

The protein resides in the cytoplasm. Subunit of malonate decarboxylase, it is an acyl carrier protein to which acetyl and malonyl thioester residues are bound via a 2'-(5''-phosphoribosyl)-3'-dephospho-CoA prosthetic group and turn over during the catalytic mechanism. In Pseudomonas putida (Arthrobacter siderocapsulatus), this protein is Malonate decarboxylase acyl carrier protein.